Reading from the N-terminus, the 107-residue chain is UPF0145 protein Spro_1658 (107 aa).

The protein belongs to the UPF0145 family.

In Serratia proteamaculans (strain 568), this protein is UPF0145 protein Spro_1658.